The chain runs to 248 residues: Pyruvate formate-lyase-activating enzyme (248 aa).

The 232-residue stretch at 17 to 248 (VDGPGIRFIV…NKILETSSYK (232 aa)) folds into the Radical SAM core domain. The [4Fe-4S] cluster site is built by Cys-31, Cys-35, and Cys-38. S-adenosyl-L-methionine-binding positions include 37-39 (FCH), Gly-80, 135-137 (DIK), and His-208.

It belongs to the organic radical-activating enzymes family. [4Fe-4S] cluster serves as cofactor.

The protein localises to the cytoplasm. The catalysed reaction is glycyl-[formate C-acetyltransferase] + reduced [flavodoxin] + S-adenosyl-L-methionine = glycin-2-yl radical-[formate C-acetyltransferase] + semiquinone [flavodoxin] + 5'-deoxyadenosine + L-methionine + H(+). Its function is as follows. Activation of pyruvate formate-lyase under anaerobic conditions by generation of an organic free radical, using S-adenosylmethionine and reduced flavodoxin as cosubstrates to produce 5'-deoxy-adenosine. This is Pyruvate formate-lyase-activating enzyme (pflA) from Listeria innocua serovar 6a (strain ATCC BAA-680 / CLIP 11262).